Reading from the N-terminus, the 241-residue chain is DNA repair protein RecO (241 aa).

The protein belongs to the RecO family.

In terms of biological role, involved in DNA repair and RecF pathway recombination. The chain is DNA repair protein RecO from Phocaeicola vulgatus (strain ATCC 8482 / DSM 1447 / JCM 5826 / CCUG 4940 / NBRC 14291 / NCTC 11154) (Bacteroides vulgatus).